The sequence spans 151 residues: uncharacterized protein (151 aa).

This is an uncharacterized protein from Mycoplasma genitalium (strain ATCC 33530 / DSM 19775 / NCTC 10195 / G37) (Mycoplasmoides genitalium).